A 1192-amino-acid polypeptide reads, in one-letter code: Methionine synthase (1192 aa).

One can recognise a Hcy-binding domain in the interval 1-312; the sequence is MTAADKHLYD…AHIREVAAAV (312 aa). Zn(2+) contacts are provided by C231, C297, and C298. Residues 343–601 form the Pterin-binding domain; the sequence is VLVIGERTNA…RIPEEQRNVA (259 aa). Positions 635–728 constitute a B12-binding N-terminal domain; it reads RLAELAGLPL…HMERSDDDSG (94 aa). Positions 729-866 constitute a B12-binding domain; that stretch reads KGRIVLATVK…SAKRGEAPDE (138 aa). Methylcob(III)alamin contacts are provided by residues 739–743, H742, S787, and A845; that span reads GDVHD. Residues 860–904 are disordered; sequence RGEAPDENSPEAIKAREKEAERKARHQRSKRIAAQRKAAEEPVEV. Residues 872–881 show a composition bias toward basic and acidic residues; that stretch reads IKAREKEAER. Residues 882–893 are compositionally biased toward basic residues; that stretch reads KARHQRSKRIAA. One can recognise an AdoMet activation domain in the interval 893 to 1192; it reads AQRKAAEEPV…HHPEAKYFNV (300 aa). S-adenosyl-L-methionine contacts are provided by residues D940, R1135, and 1189–1190; that span reads YF.

The protein belongs to the vitamin-B12 dependent methionine synthase family. The cofactor is methylcob(III)alamin. Zn(2+) is required as a cofactor.

The enzyme catalyses (6S)-5-methyl-5,6,7,8-tetrahydrofolate + L-homocysteine = (6S)-5,6,7,8-tetrahydrofolate + L-methionine. Its pathway is amino-acid biosynthesis; L-methionine biosynthesis via de novo pathway; L-methionine from L-homocysteine (MetH route): step 1/1. Catalyzes the transfer of a methyl group from methyl-cobalamin to homocysteine, yielding enzyme-bound cob(I)alamin and methionine. Subsequently, remethylates the cofactor using methyltetrahydrofolate. The sequence is that of Methionine synthase (metH) from Mycobacterium tuberculosis (strain ATCC 25618 / H37Rv).